The chain runs to 319 residues: MTATVSTTDTPLNASRASGPGFARKAKAYLALTKPRVIELLLVSTLPTMIYAERGFPSIGLILATLVGGAFAAGSAGAFNCYIDRDIDKLMARTENRPLVTGEVTPREALVFSWLLGAAAIAILWFGANPLSAWLGLGAIFFYVVIYTIILKRRTAQNIVWGGAAGCFPVLIAWAAVTNSVEWPAIILFMVIFLWTPPHYWPLSMRYGEDYRNAKVPMLGAIAGAKVVSVQVVLYAWAMVACSLLMVPAGGAGWVYTVTAVLAGAWFLYESHALYNRAQREDIPDKRAMKVFHGSISYLTLLFIALAVDPFVGPAVIGG.

The next 8 membrane-spanning stretches (helical) occupy residues 59–79 (IGLILATLVGGAFAAGSAGAF), 108–128 (EALVFSWLLGAAAIAILWFGA), 131–151 (LSAWLGLGAIFFYVVIYTIIL), 158–178 (NIVWGGAAGCFPVLIAWAAVT), 183–203 (WPAIILFMVIFLWTPPHYWPL), 232–252 (VVLYAWAMVACSLLMVPAGGA), 254–274 (WVYTVTAVLAGAWFLYESHAL), and 299–319 (LTLLFIALAVDPFVGPAVIGG).

Belongs to the UbiA prenyltransferase family. Protoheme IX farnesyltransferase subfamily.

The protein localises to the cell membrane. The catalysed reaction is heme b + (2E,6E)-farnesyl diphosphate + H2O = Fe(II)-heme o + diphosphate. It participates in porphyrin-containing compound metabolism; heme O biosynthesis; heme O from protoheme: step 1/1. Converts heme B (protoheme IX) to heme O by substitution of the vinyl group on carbon 2 of heme B porphyrin ring with a hydroxyethyl farnesyl side group. This Pseudarthrobacter chlorophenolicus (strain ATCC 700700 / DSM 12829 / CIP 107037 / JCM 12360 / KCTC 9906 / NCIMB 13794 / A6) (Arthrobacter chlorophenolicus) protein is Protoheme IX farnesyltransferase.